Reading from the N-terminus, the 477-residue chain is Adenosylhomocysteinase (477 aa).

Residues Thr63, Asp142, and Glu202 each coordinate substrate. Position 203–205 (203–205 (TTT)) interacts with NAD(+). Residues Lys232 and Asp236 each coordinate substrate. Residues Asn237, 266–271 (GYGDVG), Glu289, Asn324, 345–347 (IGH), and Asn390 contribute to the NAD(+) site.

Belongs to the adenosylhomocysteinase family. The cofactor is NAD(+).

Its subcellular location is the cytoplasm. It carries out the reaction S-adenosyl-L-homocysteine + H2O = L-homocysteine + adenosine. The protein operates within amino-acid biosynthesis; L-homocysteine biosynthesis; L-homocysteine from S-adenosyl-L-homocysteine: step 1/1. In terms of biological role, may play a key role in the regulation of the intracellular concentration of adenosylhomocysteine. The chain is Adenosylhomocysteinase from Leptothrix cholodnii (strain ATCC 51168 / LMG 8142 / SP-6) (Leptothrix discophora (strain SP-6)).